We begin with the raw amino-acid sequence, 498 residues long: Protein disulfide-isomerase (498 aa).

The signal sequence occupies residues 1-23 (MASFRGSIWYCIFVLSLIAVAIS). Thioredoxin domains lie at 24 to 143 (AAES…KQSG) and 339 to 484 (YLKA…KNRD). A glycan (N-linked (GlcNAc...) asparagine) is linked at asparagine 41. Residues cysteine 61, cysteine 64, cysteine 406, and cysteine 409 each act as nucleophile in the active site. 2 cysteine pairs are disulfide-bonded: cysteine 61–cysteine 64 and cysteine 406–cysteine 409. Residues 495–498 (KDEL) carry the Prevents secretion from ER motif.

Belongs to the protein disulfide isomerase family.

It localises to the endoplasmic reticulum lumen. The catalysed reaction is Catalyzes the rearrangement of -S-S- bonds in proteins.. Participates in the folding of proteins containing disulfide bonds, may be involved in glycosylation, prolyl hydroxylation and triglyceride transfer. In Ricinus communis (Castor bean), this protein is Protein disulfide-isomerase.